The following is a 341-amino-acid chain: Glycerol-3-phosphate dehydrogenase [NAD(P)+] 1 (341 aa).

Residues serine 17, tryptophan 18, arginine 37, and lysine 112 each coordinate NADPH. Sn-glycerol 3-phosphate is bound by residues lysine 112 and glycine 140. An NADPH-binding site is contributed by alanine 144. Residues lysine 195, aspartate 248, serine 258, arginine 259, and asparagine 260 each contribute to the sn-glycerol 3-phosphate site. The active-site Proton acceptor is lysine 195. Arginine 259 contacts NADPH. 2 residues coordinate NADPH: valine 283 and glutamate 285.

The protein belongs to the NAD-dependent glycerol-3-phosphate dehydrogenase family.

It localises to the cytoplasm. It carries out the reaction sn-glycerol 3-phosphate + NAD(+) = dihydroxyacetone phosphate + NADH + H(+). The enzyme catalyses sn-glycerol 3-phosphate + NADP(+) = dihydroxyacetone phosphate + NADPH + H(+). Its pathway is membrane lipid metabolism; glycerophospholipid metabolism. Functionally, catalyzes the reduction of the glycolytic intermediate dihydroxyacetone phosphate (DHAP) to sn-glycerol 3-phosphate (G3P), the key precursor for phospholipid synthesis. This Mycobacterium bovis (strain ATCC BAA-935 / AF2122/97) protein is Glycerol-3-phosphate dehydrogenase [NAD(P)+] 1.